The following is a 149-amino-acid chain: Transcriptional repressor NrdR (149 aa).

A zinc finger spans residues 3–34; it reads CPFCSAVDTKVIDSRLVGEGSSVRRRRQCLVC. Residues 49–139 form the ATP-cone domain; it reads PRVVKSNDVR…VYRSFEDIKE (91 aa).

The protein belongs to the NrdR family. Zn(2+) is required as a cofactor.

Negatively regulates transcription of bacterial ribonucleotide reductase nrd genes and operons by binding to NrdR-boxes. In Enterobacter sp. (strain 638), this protein is Transcriptional repressor NrdR.